Consider the following 178-residue polypeptide: Cytidylate kinase (178 aa).

Position 7–15 (Gly-7–Thr-15) interacts with ATP.

Belongs to the cytidylate kinase family. Type 2 subfamily.

It localises to the cytoplasm. It carries out the reaction CMP + ATP = CDP + ADP. The enzyme catalyses dCMP + ATP = dCDP + ADP. The protein is Cytidylate kinase (cmk) of Methanocaldococcus jannaschii (strain ATCC 43067 / DSM 2661 / JAL-1 / JCM 10045 / NBRC 100440) (Methanococcus jannaschii).